The sequence spans 77 residues: uncharacterized protein (77 aa).

2 disordered regions span residues 1-34 (MSRA…TKMN) and 56-77 (LDGD…FSGR). Residues 8–20 (DNDKGWAKKKGAD) show a composition bias toward basic and acidic residues. A compositionally biased stretch (basic residues) spans 25 to 34 (PRPHKQTKMN). Residues 56 to 70 (LDGDIRRGGNKKSER) show a composition bias toward basic and acidic residues.

This is an uncharacterized protein from Dictyostelium discoideum (Social amoeba).